The primary structure comprises 356 residues: Dihydroorotate dehydrogenase (quinone) (356 aa).

Residues 66–70 (AGFDK) and Thr-90 each bind FMN. Residue Lys-70 participates in substrate binding. 115 to 119 (NRMGF) lines the substrate pocket. FMN is bound by residues Asn-143 and Asn-176. Asn-176 serves as a coordination point for substrate. Residue Ser-179 is the Nucleophile of the active site. Asn-181 provides a ligand contact to substrate. Residues Lys-212 and Thr-240 each coordinate FMN. 241–242 (NT) is a substrate binding site. Residues Gly-266, Gly-295, and 316–317 (YT) each bind FMN.

It belongs to the dihydroorotate dehydrogenase family. Type 2 subfamily. As to quaternary structure, monomer. FMN serves as cofactor.

It localises to the cell membrane. The enzyme catalyses (S)-dihydroorotate + a quinone = orotate + a quinol. The protein operates within pyrimidine metabolism; UMP biosynthesis via de novo pathway; orotate from (S)-dihydroorotate (quinone route): step 1/1. In terms of biological role, catalyzes the conversion of dihydroorotate to orotate with quinone as electron acceptor. In Rhodococcus opacus (strain B4), this protein is Dihydroorotate dehydrogenase (quinone).